The chain runs to 193 residues: Holliday junction branch migration complex subunit RuvA (193 aa).

Residues 1 to 64 form a domain I region; that stretch reads MIGRIAGILL…EDAHLLYGFL (64 aa). The tract at residues 65–139 is domain II; it reads TQQERTTFRE…GKLGADLGAL (75 aa). The segment at 139 to 143 is flexible linker; it reads LAGAA. Residues 144 to 193 are domain III; sequence SPSDHATDILNALLALGYSEKEGLAAIKNVPAGTGVSEGIKLALKALSKA.

This sequence belongs to the RuvA family. Homotetramer. Forms an RuvA(8)-RuvB(12)-Holliday junction (HJ) complex. HJ DNA is sandwiched between 2 RuvA tetramers; dsDNA enters through RuvA and exits via RuvB. An RuvB hexamer assembles on each DNA strand where it exits the tetramer. Each RuvB hexamer is contacted by two RuvA subunits (via domain III) on 2 adjacent RuvB subunits; this complex drives branch migration. In the full resolvosome a probable DNA-RuvA(4)-RuvB(12)-RuvC(2) complex forms which resolves the HJ.

It is found in the cytoplasm. Functionally, the RuvA-RuvB-RuvC complex processes Holliday junction (HJ) DNA during genetic recombination and DNA repair, while the RuvA-RuvB complex plays an important role in the rescue of blocked DNA replication forks via replication fork reversal (RFR). RuvA specifically binds to HJ cruciform DNA, conferring on it an open structure. The RuvB hexamer acts as an ATP-dependent pump, pulling dsDNA into and through the RuvAB complex. HJ branch migration allows RuvC to scan DNA until it finds its consensus sequence, where it cleaves and resolves the cruciform DNA. In Burkholderia cenocepacia (strain ATCC BAA-245 / DSM 16553 / LMG 16656 / NCTC 13227 / J2315 / CF5610) (Burkholderia cepacia (strain J2315)), this protein is Holliday junction branch migration complex subunit RuvA.